A 124-amino-acid polypeptide reads, in one-letter code: Large ribosomal subunit protein bL12 (124 aa).

This sequence belongs to the bacterial ribosomal protein bL12 family. As to quaternary structure, homodimer. Part of the ribosomal stalk of the 50S ribosomal subunit. Forms a multimeric L10(L12)X complex, where L10 forms an elongated spine to which 2 to 4 L12 dimers bind in a sequential fashion. Binds GTP-bound translation factors.

Its function is as follows. Forms part of the ribosomal stalk which helps the ribosome interact with GTP-bound translation factors. Is thus essential for accurate translation. In Vesicomyosocius okutanii subsp. Calyptogena okutanii (strain HA), this protein is Large ribosomal subunit protein bL12.